An 83-amino-acid chain; its full sequence is Large ribosomal subunit protein bL27c (83 aa).

The interval 1 to 21 (MAHKKGAGSTKNGRDSNAKRL) is disordered.

It belongs to the bacterial ribosomal protein bL27 family.

It is found in the plastid. The protein localises to the chloroplast. This chain is Large ribosomal subunit protein bL27c, found in Phaeodactylum tricornutum (strain CCAP 1055/1).